The following is a 269-amino-acid chain: tRNA pseudouridine synthase A (269 aa).

Catalysis depends on Asp-55, which acts as the Nucleophile. Position 111 (Tyr-111) interacts with substrate.

It belongs to the tRNA pseudouridine synthase TruA family.

The catalysed reaction is uridine(38/39/40) in tRNA = pseudouridine(38/39/40) in tRNA. In terms of biological role, formation of pseudouridine at positions 38, 39 and 40 in the anticodon stem and loop of transfer RNAs. This chain is tRNA pseudouridine synthase A, found in Methanosarcina mazei (strain ATCC BAA-159 / DSM 3647 / Goe1 / Go1 / JCM 11833 / OCM 88) (Methanosarcina frisia).